The chain runs to 127 residues: Large-conductance mechanosensitive channel (127 aa).

Helical transmembrane passes span 19 to 39, 42 to 62, and 67 to 87; these read VGVIVGAAFTAIVNSLVTNII, LLGIFVGSIDFSNLVFTVGSA, and GAFINSVINFLIIAFVVFLLI.

It belongs to the MscL family. As to quaternary structure, homopentamer.

The protein resides in the cell membrane. Functionally, channel that opens in response to stretch forces in the membrane lipid bilayer. May participate in the regulation of osmotic pressure changes within the cell. In Levilactobacillus brevis (strain ATCC 367 / BCRC 12310 / CIP 105137 / JCM 1170 / LMG 11437 / NCIMB 947 / NCTC 947) (Lactobacillus brevis), this protein is Large-conductance mechanosensitive channel.